A 474-amino-acid chain; its full sequence is Nitric oxide reductase subunit B (474 aa).

The helical transmembrane segment at 19–39 threads the bilayer; the sequence is YFVFALILFVGQVLFGLIMGL. Residue His-60 coordinates heme b. 8 helical membrane-spanning segments follow: residues 61 to 81, 95 to 115, 145 to 165, 169 to 189, 207 to 227, 243 to 263, 270 to 290, and 308 to 328; these read TNLL…YLIP, IILF…YLFV, IGIV…MLKG, VVST…LFAF, HLWV…FVLI, VIIA…FFWI, LWVG…MVLF, and SLWA…WGFM. Fe cation-binding residues include His-207, His-258, and His-259. The heme b site is built by His-347 and His-349. A run of 3 helical transmembrane segments spans residues 348–368, 390–410, and 433–453; these read GHLA…SYAM, FWLM…AGVV, and LAIF…GLVC.

Belongs to the heme-copper respiratory oxidase family. Heterodimer of cytochromes b (large subunit) and c (small subunit).

The protein resides in the cell membrane. The enzyme catalyses nitrous oxide + 2 Fe(III)-[cytochrome c] + H2O = 2 nitric oxide + 2 Fe(II)-[cytochrome c] + 2 H(+). Its pathway is nitrogen metabolism; nitrate reduction (denitrification); dinitrogen from nitrate: step 3/4. Component of the anaerobic respiratory chain that transforms nitrate to dinitrogen (denitrification). NorB is the catalytic subunit of the enzyme complex. Shows proton pump activity across the membrane in denitrifying bacterial cells. The mononitrogen reduction is probably coupled to electron transport phosphorylation. In Stutzerimonas stutzeri (Pseudomonas stutzeri), this protein is Nitric oxide reductase subunit B (norB).